A 152-amino-acid chain; its full sequence is Ribosome maturation factor RimP (152 aa).

The protein belongs to the RimP family.

The protein resides in the cytoplasm. Required for maturation of 30S ribosomal subunits. The polypeptide is Ribosome maturation factor RimP (Alkaliphilus metalliredigens (strain QYMF)).